We begin with the raw amino-acid sequence, 328 residues long: Methionyl-tRNA formyltransferase (328 aa).

121–124 (SLLP) is a (6S)-5,6,7,8-tetrahydrofolate binding site.

The protein belongs to the Fmt family.

The enzyme catalyses L-methionyl-tRNA(fMet) + (6R)-10-formyltetrahydrofolate = N-formyl-L-methionyl-tRNA(fMet) + (6S)-5,6,7,8-tetrahydrofolate + H(+). Functionally, attaches a formyl group to the free amino group of methionyl-tRNA(fMet). The formyl group appears to play a dual role in the initiator identity of N-formylmethionyl-tRNA by promoting its recognition by IF2 and preventing the misappropriation of this tRNA by the elongation apparatus. The protein is Methionyl-tRNA formyltransferase of Paraburkholderia xenovorans (strain LB400).